Reading from the N-terminus, the 163-residue chain is MAKESSFDIVSKIELPEVTNAINIALKEIQNRYDFKGSKSDIKLEKEELVLISDDEFKLEQVKDVLISKLIKRNVPIKNLNYGKVENAAGNTVRQRATLQQGIDKDNAKKINSIIKDLKLKVKTQVQDDQVRVTGKSRDDLQAVIAAIRSADLPIDVQFINYR.

The protein belongs to the YajQ family.

Nucleotide-binding protein. This is Nucleotide-binding protein Bcer98_0876 from Bacillus cytotoxicus (strain DSM 22905 / CIP 110041 / 391-98 / NVH 391-98).